The chain runs to 72 residues: Cell division protein ZapB (72 aa).

A coiled-coil region spans residues 1-72 (MSSEILDQLE…RSLLGQIDNV (72 aa)).

The protein belongs to the ZapB family. Homodimer. The ends of the coiled-coil dimer bind to each other, forming polymers. Interacts with FtsZ.

It is found in the cytoplasm. In terms of biological role, non-essential, abundant cell division factor that is required for proper Z-ring formation. It is recruited early to the divisome by direct interaction with FtsZ, stimulating Z-ring assembly and thereby promoting cell division earlier in the cell cycle. Its recruitment to the Z-ring requires functional FtsA or ZipA. This Actinobacillus succinogenes (strain ATCC 55618 / DSM 22257 / CCUG 43843 / 130Z) protein is Cell division protein ZapB.